Consider the following 130-residue polypeptide: Small ribosomal subunit protein uS11 (130 aa).

The protein belongs to the universal ribosomal protein uS11 family. Part of the 30S ribosomal subunit. Interacts with proteins S7 and S18. Binds to IF-3.

In terms of biological role, located on the platform of the 30S subunit, it bridges several disparate RNA helices of the 16S rRNA. Forms part of the Shine-Dalgarno cleft in the 70S ribosome. This Prochlorococcus marinus (strain MIT 9301) protein is Small ribosomal subunit protein uS11.